Consider the following 89-residue polypeptide: Nucleoside triphosphatase I (89 aa).

The 48-residue stretch at 42-89 (FLGLDKMHSLLLFHDTGVGKTITTTFIIKQLKNIYTNWSILLLVKKHL) folds into the Helicase ATP-binding domain. 55–62 (HDTGVGKT) serves as a coordination point for ATP.

The protein belongs to the helicase family. NPH I subfamily.

It carries out the reaction a ribonucleoside 5'-triphosphate + H2O = a ribonucleoside 5'-diphosphate + phosphate + H(+). Serves two roles in transcription; it acts in concert with viral termination factor/capping enzyme to catalyze release of UUUUUNU-containing nascent RNA from the elongation complex, and it acts by itself as a polymerase elongation factor to facilitate readthrough of intrinsic pause sites. The sequence is that of Nucleoside triphosphatase I (NPH1) from Swinepox virus (strain Kasza) (SWPV).